A 103-amino-acid chain; its full sequence is Small ribosomal subunit protein uS10 (103 aa).

Belongs to the universal ribosomal protein uS10 family. As to quaternary structure, part of the 30S ribosomal subunit.

Functionally, involved in the binding of tRNA to the ribosomes. This is Small ribosomal subunit protein uS10 from Polynucleobacter necessarius subsp. necessarius (strain STIR1).